We begin with the raw amino-acid sequence, 190 residues long: Succinate dehydrogenase assembly factor 2, mitochondrial (190 aa).

It belongs to the SDHAF2 family. As to quaternary structure, interacts with the flavoprotein subunit within the SDH catalytic dimer.

The protein resides in the mitochondrion matrix. Its function is as follows. Plays an essential role in the assembly of succinate dehydrogenase (SDH), an enzyme complex (also referred to as respiratory complex II) that is a component of both the tricarboxylic acid (TCA) cycle and the mitochondrial electron transport chain, and which couples the oxidation of succinate to fumarate with the reduction of ubiquinone (coenzyme Q) to ubiquinol. Required for flavinylation (covalent attachment of FAD) of the flavoprotein subunit of the SDH catalytic dimer. The sequence is that of Succinate dehydrogenase assembly factor 2, mitochondrial from Komagataella phaffii (strain GS115 / ATCC 20864) (Yeast).